Consider the following 126-residue polypeptide: S-adenosylmethionine decarboxylase proenzyme (126 aa).

Residue Ser-63 is the Schiff-base intermediate with substrate; via pyruvic acid of the active site. Ser-63 is subject to Pyruvic acid (Ser); by autocatalysis. His-68 serves as the catalytic Proton acceptor; for processing activity. Cys-83 acts as the Proton donor; for catalytic activity in catalysis.

It belongs to the prokaryotic AdoMetDC family. Type 1 subfamily. In terms of assembly, heterotetramer of two alpha and two beta chains arranged as a dimer of alpha/beta heterodimers. Pyruvate is required as a cofactor. Is synthesized initially as an inactive proenzyme. Formation of the active enzyme involves a self-maturation process in which the active site pyruvoyl group is generated from an internal serine residue via an autocatalytic post-translational modification. Two non-identical subunits are generated from the proenzyme in this reaction, and the pyruvate is formed at the N-terminus of the alpha chain, which is derived from the carboxyl end of the proenzyme. The post-translation cleavage follows an unusual pathway, termed non-hydrolytic serinolysis, in which the side chain hydroxyl group of the serine supplies its oxygen atom to form the C-terminus of the beta chain, while the remainder of the serine residue undergoes an oxidative deamination to produce ammonia and the pyruvoyl group blocking the N-terminus of the alpha chain.

The catalysed reaction is S-adenosyl-L-methionine + H(+) = S-adenosyl 3-(methylsulfanyl)propylamine + CO2. The protein operates within amine and polyamine biosynthesis; S-adenosylmethioninamine biosynthesis; S-adenosylmethioninamine from S-adenosyl-L-methionine: step 1/1. Its function is as follows. Catalyzes the decarboxylation of S-adenosylmethionine to S-adenosylmethioninamine (dcAdoMet), the propylamine donor required for the synthesis of the polyamines spermine and spermidine from the diamine putrescine. This chain is S-adenosylmethionine decarboxylase proenzyme, found in Clostridium tetani (strain Massachusetts / E88).